Here is a 126-residue protein sequence, read N- to C-terminus: Histone H2B type 1-K (126 aa).

Residues 1 to 12 are compositionally biased toward low complexity; the sequence is MPEPAKSAPAPK. Residues 1 to 36 are disordered; sequence MPEPAKSAPAPKKGSKKAVTKAQKKDGKKRKRSRKE. Residue proline 2 is modified to N-acetylproline. ADP-ribosyl glutamic acid is present on glutamate 3. The residue at position 6 (lysine 6) is an N6-(2-hydroxyisobutyryl)lysine; alternate. Lysine 6 is subject to N6-(beta-hydroxybutyryl)lysine; alternate. The residue at position 6 (lysine 6) is an N6-acetyllysine; alternate. Residue lysine 6 is modified to N6-butyryllysine; alternate. Lysine 6 carries the N6-crotonyllysine; alternate modification. Lysine 6 carries the N6-lactoyllysine; alternate modification. A Glycyl lysine isopeptide (Lys-Gly) (interchain with G-Cter in SUMO2); alternate cross-link involves residue lysine 6. Position 7 is an ADP-ribosylserine (serine 7). Lysine 12 is subject to N6-(beta-hydroxybutyryl)lysine; alternate. N6-acetyllysine; alternate is present on residues lysine 12 and lysine 13. An N6-crotonyllysine; alternate mark is found at lysine 12 and lysine 13. Lysine 12 bears the N6-lactoyllysine; alternate mark. Residue lysine 13 is modified to N6-(2-hydroxyisobutyryl)lysine; alternate. Serine 15 bears the Phosphoserine; by STK4/MST1 mark. 4 positions are modified to N6-acetyllysine; alternate: lysine 16, lysine 17, lysine 21, and lysine 24. 4 positions are modified to N6-crotonyllysine; alternate: lysine 16, lysine 17, lysine 21, and lysine 24. N6-lactoyllysine; alternate is present on residues lysine 16, lysine 17, lysine 21, and lysine 24. Position 17 is an N6-glutaryllysine; alternate (lysine 17). Lysine 21 and lysine 24 each carry N6-(2-hydroxyisobutyryl)lysine; alternate. At lysine 21 the chain carries N6-(beta-hydroxybutyryl)lysine; alternate. Lysine 21 carries the post-translational modification N6-butyryllysine; alternate. Residue lysine 21 forms a Glycyl lysine isopeptide (Lys-Gly) (interchain with G-Cter in SUMO2); alternate linkage. Lysine 25 bears the N6-(2-hydroxyisobutyryl)lysine mark. Lysine 35 is modified (N6-(2-hydroxyisobutyryl)lysine; alternate). The residue at position 35 (lysine 35) is an N6-(beta-hydroxybutyryl)lysine; alternate. An N6-crotonyllysine; alternate modification is found at lysine 35. An N6-glutaryllysine; alternate modification is found at lysine 35. An N6-succinyllysine; alternate modification is found at lysine 35. Lysine 35 participates in a covalent cross-link: Glycyl lysine isopeptide (Lys-Gly) (interchain with G-Cter in ubiquitin); alternate. Glutamate 36 carries the polyADP-ribosyl glutamic acid modification. Serine 37 bears the Phosphoserine; by AMPK mark. 3 positions are modified to N6-(2-hydroxyisobutyryl)lysine; alternate: lysine 44, lysine 47, and lysine 58. Residue lysine 44 is modified to N6-lactoyllysine; alternate. Lysine 44 and lysine 47 each carry N6-glutaryllysine; alternate. The residue at position 47 (lysine 47) is an N6-methyllysine; alternate. Lysine 58 carries the post-translational modification N6,N6-dimethyllysine; alternate. Arginine 80 carries the post-translational modification Dimethylated arginine. An N6-(2-hydroxyisobutyryl)lysine; alternate modification is found at lysine 86. N6-acetyllysine; alternate is present on lysine 86. Lysine 86 is modified (N6-lactoyllysine; alternate). Lysine 86 is subject to N6,N6,N6-trimethyllysine; alternate. Omega-N-methylarginine is present on residues arginine 87 and arginine 93. N6-(2-hydroxyisobutyryl)lysine; alternate is present on lysine 109. Position 109 is an N6-(beta-hydroxybutyryl)lysine; alternate (lysine 109). Lysine 109 bears the N6-lactoyllysine; alternate mark. Lysine 109 carries the N6-glutaryllysine; alternate modification. Position 109 is an N6-methyllysine; alternate (lysine 109). Serine 113 is a glycosylation site (O-linked (GlcNAc) serine). Threonine 116 carries the post-translational modification Phosphothreonine. Lysine 117 and lysine 121 each carry N6-(2-hydroxyisobutyryl)lysine; alternate. Lysine 117 bears the N6-(beta-hydroxybutyryl)lysine; alternate mark. N6-lactoyllysine; alternate occurs at positions 117 and 121. N6-glutaryllysine; alternate is present on residues lysine 117 and lysine 121. 2 positions are modified to N6-succinyllysine; alternate: lysine 117 and lysine 121. Lysine 117 carries the post-translational modification N6-methylated lysine; alternate. A Glycyl lysine isopeptide (Lys-Gly) (interchain with G-Cter in ubiquitin); alternate cross-link involves residue lysine 121.

The protein belongs to the histone H2B family. As to quaternary structure, the nucleosome is a histone octamer containing two molecules each of H2A, H2B, H3 and H4 assembled in one H3-H4 heterotetramer and two H2A-H2B heterodimers. The octamer wraps approximately 147 bp of DNA. Post-translationally, monoubiquitination at Lys-35 (H2BK34Ub) by the MSL1/MSL2 dimer is required for histone H3 'Lys-4' (H3K4me) and 'Lys-79' (H3K79me) methylation and transcription activation at specific gene loci, such as HOXA9 and MEIS1 loci. Similarly, monoubiquitination at Lys-121 (H2BK120Ub) by the RNF20/40 complex gives a specific tag for epigenetic transcriptional activation and is also prerequisite for histone H3 'Lys-4' and 'Lys-79' methylation. It also functions cooperatively with the FACT dimer to stimulate elongation by RNA polymerase II. H2BK120Ub also acts as a regulator of mRNA splicing: deubiquitination by USP49 is required for efficient cotranscriptional splicing of a large set of exons. Phosphorylated on Ser-15 (H2BS14ph) by STK4/MST1 during apoptosis; which facilitates apoptotic chromatin condensation. Also phosphorylated on Ser-15 in response to DNA double strand breaks (DSBs), and in correlation with somatic hypermutation and immunoglobulin class-switch recombination. Phosphorylation at Ser-37 (H2BS36ph) by AMPK in response to stress promotes transcription. In terms of processing, glcNAcylation at Ser-113 promotes monoubiquitination of Lys-121. It fluctuates in response to extracellular glucose, and associates with transcribed genes. Post-translationally, ADP-ribosylated by PARP1 or PARP2 on Ser-7 (H2BS6ADPr) in response to DNA damage. H2BS6ADPr promotes recruitment of CHD1L. Mono-ADP-ribosylated on Glu-3 (H2BE2ADPr) by PARP3 in response to single-strand breaks. Poly ADP-ribosylation on Glu-36 (H2BE35ADPr) by PARP1 regulates adipogenesis: it inhibits phosphorylation at Ser-37 (H2BS36ph), thereby blocking expression of pro-adipogenetic genes. Crotonylation (Kcr) is specifically present in male germ cells and marks testis-specific genes in post-meiotic cells, including X-linked genes that escape sex chromosome inactivation in haploid cells. Crotonylation marks active promoters and enhancers and confers resistance to transcriptional repressors. It is also associated with post-meiotically activated genes on autosomes. In terms of processing, hydroxybutyrylation of histones is induced by starvation. Post-translationally, lactylated in macrophages by EP300/P300 by using lactoyl-CoA directly derived from endogenous or exogenous lactate, leading to stimulates gene transcription.

It localises to the nucleus. The protein resides in the chromosome. Its function is as follows. Core component of nucleosome. Nucleosomes wrap and compact DNA into chromatin, limiting DNA accessibility to the cellular machineries which require DNA as a template. Histones thereby play a central role in transcription regulation, DNA repair, DNA replication and chromosomal stability. DNA accessibility is regulated via a complex set of post-translational modifications of histones, also called histone code, and nucleosome remodeling. The chain is Histone H2B type 1-K from Mus musculus (Mouse).